We begin with the raw amino-acid sequence, 135 residues long: Small ribosomal subunit protein uS11 (135 aa).

This sequence belongs to the universal ribosomal protein uS11 family. Part of the 30S ribosomal subunit. Interacts with proteins S7 and S18. Binds to IF-3.

In terms of biological role, located on the platform of the 30S subunit, it bridges several disparate RNA helices of the 16S rRNA. Forms part of the Shine-Dalgarno cleft in the 70S ribosome. In Polynucleobacter necessarius subsp. necessarius (strain STIR1), this protein is Small ribosomal subunit protein uS11.